The primary structure comprises 327 residues: Plastid lipid-associated protein 1, chloroplastic (327 aa).

A chloroplast-targeting transit peptide spans 1–84; the sequence is MATTVPLFSQ…WGPEIGLNSS (84 aa). The segment at 56-78 is disordered; it reads VNDEWGPDSKGRGGDVDDEWGPE. A coiled-coil region spans residues 85–107; that stretch reads VAEKVAEEAIESAEETERLKRVL.

It belongs to the PAP/fibrillin family. Expressed in anthers, sepals seeds, fruit coats, and leaves. Very low in petals and pistils and not detected in roots.

Its subcellular location is the plastid. The protein resides in the chloroplast. Functionally, may modulate the action of carotenoids. The polypeptide is Plastid lipid-associated protein 1, chloroplastic (PAP1) (Brassica campestris (Field mustard)).